The primary structure comprises 345 residues: Heat-inducible transcription repressor HrcA (345 aa).

Belongs to the HrcA family.

In terms of biological role, negative regulator of class I heat shock genes (grpE-dnaK-dnaJ and groELS operons). Prevents heat-shock induction of these operons. The chain is Heat-inducible transcription repressor HrcA from Dehalococcoides mccartyi (strain ATCC BAA-2266 / KCTC 15142 / 195) (Dehalococcoides ethenogenes (strain 195)).